We begin with the raw amino-acid sequence, 211 residues long: Glycerol-3-phosphate acyltransferase (211 aa).

4 helical membrane-spanning segments follow: residues 5–25, 80–100, 112–132, and 138–158; these read ALGM…ILFC, PLYL…PVFF, FGAI…TWLL, and GYSS…VWWF.

It belongs to the PlsY family. Probably interacts with PlsX.

Its subcellular location is the cell inner membrane. It carries out the reaction an acyl phosphate + sn-glycerol 3-phosphate = a 1-acyl-sn-glycero-3-phosphate + phosphate. It participates in lipid metabolism; phospholipid metabolism. Catalyzes the transfer of an acyl group from acyl-phosphate (acyl-PO(4)) to glycerol-3-phosphate (G3P) to form lysophosphatidic acid (LPA). This enzyme utilizes acyl-phosphate as fatty acyl donor, but not acyl-CoA or acyl-ACP. The sequence is that of Glycerol-3-phosphate acyltransferase from Pectobacterium carotovorum subsp. carotovorum (strain PC1).